A 381-amino-acid chain; its full sequence is Cytochrome b (381 aa).

4 helical membrane passes run 34–54, 78–99, 114–134, and 179–199; these read FGSLLGLCLVIQIVTGLFLAM, WLIRNIHANGASLFFVCIYFHI, WNIGVILLFLLMATAFVGYVL, and FFAFHFLLPFLITALMIIHIL. Histidine 84 and histidine 98 together coordinate heme b. Heme b contacts are provided by histidine 183 and histidine 197. A ubiquinone is bound at residue histidine 202. The next 4 membrane-spanning stretches (helical) occupy residues 227–247, 289–309, 321–341, and 348–368; these read YKDALGFLSLLILLGILALFL, LGGVLALLFSILILMLVPFLH, LTQVFFWILVANMLVLTWIGG, and FILIGQIASISYFSLFLIAIP.

Belongs to the cytochrome b family. The cytochrome bc1 complex contains 3 respiratory subunits (MT-CYB, CYC1 and UQCRFS1), 2 core proteins (UQCRC1 and UQCRC2) and probably 6 low-molecular weight proteins. Heme b serves as cofactor.

It is found in the mitochondrion inner membrane. Its function is as follows. Component of the ubiquinol-cytochrome c reductase complex (complex III or cytochrome b-c1 complex) that is part of the mitochondrial respiratory chain. The b-c1 complex mediates electron transfer from ubiquinol to cytochrome c. Contributes to the generation of a proton gradient across the mitochondrial membrane that is then used for ATP synthesis. In Carcharodon carcharias (Great white shark), this protein is Cytochrome b (mt-cyb).